The primary structure comprises 205 residues: Urease accessory protein UreG (205 aa).

G10–T17 contributes to the GTP binding site.

Belongs to the SIMIBI class G3E GTPase family. UreG subfamily. Homodimer. UreD, UreF and UreG form a complex that acts as a GTP-hydrolysis-dependent molecular chaperone, activating the urease apoprotein by helping to assemble the nickel containing metallocenter of UreC. The UreE protein probably delivers the nickel.

The protein resides in the cytoplasm. Facilitates the functional incorporation of the urease nickel metallocenter. This process requires GTP hydrolysis, probably effectuated by UreG. This is Urease accessory protein UreG from Corynebacterium glutamicum (strain ATCC 13032 / DSM 20300 / JCM 1318 / BCRC 11384 / CCUG 27702 / LMG 3730 / NBRC 12168 / NCIMB 10025 / NRRL B-2784 / 534).